A 172-amino-acid polypeptide reads, in one-letter code: Probable chorismate pyruvate-lyase (172 aa).

Positions 37, 79, 117, and 158 each coordinate substrate.

This sequence belongs to the UbiC family.

The protein resides in the cytoplasm. It catalyses the reaction chorismate = 4-hydroxybenzoate + pyruvate. The protein operates within cofactor biosynthesis; ubiquinone biosynthesis. Its function is as follows. Removes the pyruvyl group from chorismate, with concomitant aromatization of the ring, to provide 4-hydroxybenzoate (4HB) for the ubiquinone pathway. The sequence is that of Probable chorismate pyruvate-lyase from Bartonella quintana (strain Toulouse) (Rochalimaea quintana).